A 191-amino-acid chain; its full sequence is Uridylate kinase (191 aa).

Residue 12–17 (GAGKGT) participates in ATP binding. The tract at residues 33-63 (SAGDCLREEQNRPGSKYGNLIKEYIKDGKIV) is NMP. Residues arginine 39, 61-63 (KIV), 91-94 (GFPR), and glutamine 98 each bind a ribonucleoside 5'-phosphate. Positions 128 to 138 (HRGKTSGRSDD) are LID. Arginine 129 provides a ligand contact to ATP. Residues arginine 135 and arginine 146 each coordinate a ribonucleoside 5'-phosphate. Glutamine 174 lines the ATP pocket.

The protein belongs to the adenylate kinase family. UMP-CMP kinase subfamily. As to quaternary structure, monomer. It depends on Mg(2+) as a cofactor.

The protein resides in the cytoplasm. It localises to the nucleus. It catalyses the reaction UMP + ATP = UDP + ADP. Functionally, catalyzes the phosphorylation of pyrimidine nucleoside monophosphates at the expense of ATP. Plays an important role in de novo pyrimidine nucleotide biosynthesis. Has preference for UMP and dUMP as phosphate acceptors, but can also use CMP, dCMP and AMP. This Schizosaccharomyces pombe (strain 972 / ATCC 24843) (Fission yeast) protein is Uridylate kinase.